We begin with the raw amino-acid sequence, 206 residues long: Protein Nef (206 aa).

The N-myristoyl glycine; by host moiety is linked to residue glycine 2. The residue at position 6 (serine 6) is a Phosphoserine; by host. The acidic; interacts with host PACS1 and PACS2; stabilizes the interaction of NEF/MHC-I with host AP1M1; necessary for MHC-I internalization stretch occupies residues 62 to 65 (EEEE). Positions 69–78 (PVTPQVPLRP) are SH3-binding; interaction with Src family tyrosine kinases. A PxxP; stabilizes the interaction of NEF/MHC-I with host AP1M1; necessary for MHC-I internalization motif is present at residues 72–75 (PQVP). The mediates dimerization, Nef-PTE1 interaction stretch occupies residues 108–124 (DILDLWIYHTQGYFPDW). Residues 108 to 124 (DILDLWIYHTQGYFPDW) form a mediates dimerization, Nef-PTE1 interaction, Nef-induced CD4 and MHC-I down-regulation and enhancement of infectivity region. Residues 148–180 (VEPDKVEEANKGENTSLLHPVSLHGMDDPEREV) form a binding to ATP6V1H region. Residues 164–165 (LL) carry the Dileucine internalization motif; necessary for CD4 internalization motif. The Diacidic; necessary for CD4 internalization motif lies at 174-175 (DD).

It belongs to the lentivirus primate group Nef protein family. Monomer; cytosolic form. Homodimer; membrane bound form. Interacts with Nef associated p21-activated kinase (PAK2); this interaction activates PAK2. Associates with the Nef-MHC-I-AP1 complex; this complex is required for MHC-I internalization. Interacts (via C-terminus) with host PI3-kinase. Interacts with host PACS1; this interaction seems to be weak. Interacts with host PACS2. Interacts with host LCK and MAPK3; these interactions inhibit the kinase activity of the latter. Interacts with host ATP6V1H; this interaction may play a role in CD4 endocytosis. Associates with the CD4-Nef-AP2 complex; this complex is required for CD4 internalization. Interacts with host AP2 subunit alpha and AP2 subunit sigma2. Interacts with TCR-zeta chain; this interaction up-regulates the Fas ligand (FasL) surface expression. Interacts with host HCK, LYN, and SRC; these interactions activate the Src family kinases. Interacts with MAP3K5; this interaction inhibits the Fas and TNFR-mediated death signals. Interacts with beta-COP and PTE1. Interacts with human RACK1; this increases Nef phosphorylation by PKC. Interacts with TP53; this interaction decreases the half-life of TP53, protecting the infected cell against p53-mediated apoptosis. Post-translationally, the virion-associated Nef proteins are cleaved by the viral protease to release the soluble C-terminal core protein. Nef is probably cleaved concomitantly with viral structural proteins on maturation of virus particles. In terms of processing, myristoylated. Phosphorylated on serine residues, probably by host PKCdelta and theta.

The protein localises to the host cell membrane. The protein resides in the virion. It localises to the secreted. Its subcellular location is the host Golgi apparatus membrane. Functionally, factor of infectivity and pathogenicity, required for optimal virus replication. Alters numerous pathways of T-lymphocytes function and down-regulates immunity surface molecules in order to evade host defense and increase viral infectivity. Alters the functionality of other immunity cells, like dendritic cells, monocytes/macrophages and NK cells. In terms of biological role, in infected CD4(+) T-lymphocytes, down-regulates the surface MHC-I, mature MHC-II, CD4, CD28, CCR5 and CXCR4 molecules. Mediates internalization and degradation of host CD4 through the interaction of with the cytoplasmic tail of CD4, the recruitment of AP-2 (clathrin adapter protein complex 2), internalization through clathrin coated pits, and subsequent transport to endosomes and lysosomes for degradation. Diverts host MHC-I molecules to the trans-Golgi network-associated endosomal compartments by an endocytic pathway to finally target them for degradation. MHC-I down-regulation may involve AP-1 (clathrin adapter protein complex 1) or possibly Src family kinase-ZAP70/Syk-PI3K cascade recruited by PACS2. In consequence infected cells are masked for immune recognition by cytotoxic T-lymphocytes. Decreasing the number of immune receptors also prevents reinfection by more HIV particles (superinfection). Down-regulates host SERINC3 and SERINC5 thereby excluding these proteins from the viral particles. Virion infectivity is drastically higher when SERINC3 or SERINC5 are excluded from the viral envelope, because these host antiviral proteins impair the membrane fusion event necessary for subsequent virion penetration. Bypasses host T-cell signaling by inducing a transcriptional program nearly identical to that of anti-CD3 cell activation. Interaction with TCR-zeta chain up-regulates the Fas ligand (FasL). Increasing surface FasL molecules and decreasing surface MHC-I molecules on infected CD4(+) cells send attacking cytotoxic CD8+ T-lymphocytes into apoptosis. Its function is as follows. Plays a role in optimizing the host cell environment for viral replication without causing cell death by apoptosis. Protects the infected cells from apoptosis in order to keep them alive until the next virus generation is ready to strike. Inhibits the Fas and TNFR-mediated death signals by blocking MAP3K5/ASK1. Decreases the half-life of TP53, protecting the infected cell against p53-mediated apoptosis. Inhibits the apoptotic signals regulated by the Bcl-2 family proteins through the formation of a Nef/PI3-kinase/PAK2 complex that leads to activation of PAK2 and induces phosphorylation of host BAD. Functionally, extracellular Nef protein targets CD4(+) T-lymphocytes for apoptosis by interacting with CXCR4 surface receptors. This Homo sapiens (Human) protein is Protein Nef.